Here is a 184-residue protein sequence, read N- to C-terminus: Zinc metalloproteinase-disintegrin-like ammodytagin (184 aa).

The Peptidase M12B domain occupies 1 to 90 (KSAAXVTLDL…CPAKCIDNKP (90 aa)). Asp-20 lines the Ca(2+) pocket. His-64 serves as a coordination point for Zn(2+). Residue Glu-65 is part of the active site. His-68 and His-74 together coordinate Zn(2+). Residues Asn-88, Val-100, Asn-103, Phe-105, and Glu-107 each contribute to the Ca(2+) site. The region spanning 98–124 (PAVCGNYFVELTPGSQCADGVCCDQCR) is the Disintegrin domain. 2 disulfides stabilise this stretch: Cys-114–Cys-120 and Cys-165–Cys-177.

The protein belongs to the venom metalloproteinase (M12B) family. P-III subfamily. P-IIIc sub-subfamily. Heterodimer; disulfide-linked. Zn(2+) is required as a cofactor. In terms of processing, the N-terminus is blocked. N-glycosylated. As to expression, expressed by the venom gland.

It is found in the secreted. With respect to regulation, inhibited by EDTA, DTT and zinc ions. Partially inhibited by L-cysteine. Not inhibited by 2-propanol or PMSF. Activity is enhanced by calcium or magnesium ions. Its function is as follows. Snake venom zinc metalloprotease that has fibrinogenolytic and hemorrhagic activities in mouse and rats. Hydrolyzes the Aalpha-chain (FGA) and more slowly the Bbeta-chain of fibrinogen (FGB), without affecting the gamma-chain. Its hemorrhagic activity results of its involvement in cleavage of basal membrane components (nidogen and fibronectin but not laminin) and depletion of fibrinogen, prothrombin (F2) and factor X (F10) in blood circulation. Also possess potent azocaseinolytic activity and cleaves insulin B-chain, hydrolyzing it at positions Gln(4)-His(5), His(10)-Leu(11) and Tyr(16)-Leu(17). The sequence is that of Zinc metalloproteinase-disintegrin-like ammodytagin from Vipera ammodytes ammodytes (Western sand viper).